Reading from the N-terminus, the 99-residue chain is Phosphoribosyl-ATP pyrophosphatase (99 aa).

The protein belongs to the PRA-PH family.

The protein localises to the cytoplasm. The catalysed reaction is 1-(5-phospho-beta-D-ribosyl)-ATP + H2O = 1-(5-phospho-beta-D-ribosyl)-5'-AMP + diphosphate + H(+). The protein operates within amino-acid biosynthesis; L-histidine biosynthesis; L-histidine from 5-phospho-alpha-D-ribose 1-diphosphate: step 2/9. The polypeptide is Phosphoribosyl-ATP pyrophosphatase (Methanosphaerula palustris (strain ATCC BAA-1556 / DSM 19958 / E1-9c)).